A 256-amino-acid chain; its full sequence is Acetoacetate decarboxylase 3 (256 aa).

The active-site Schiff-base intermediate with acetoacetate is the Lys110.

The protein belongs to the ADC family.

It carries out the reaction acetoacetate + H(+) = acetone + CO2. Catalyzes the conversion of acetoacetate to acetone and carbon dioxide. This Mesorhizobium japonicum (strain LMG 29417 / CECT 9101 / MAFF 303099) (Mesorhizobium loti (strain MAFF 303099)) protein is Acetoacetate decarboxylase 3.